The following is a 269-amino-acid chain: Ribonuclease HII (269 aa).

Positions 83–269 constitute an RNase H type-2 domain; sequence YLIAGVDEVG…HRMSFLTNIL (187 aa). A divalent metal cation-binding residues include Asp-89, Glu-90, and Asp-185.

This sequence belongs to the RNase HII family. Mn(2+) is required as a cofactor. It depends on Mg(2+) as a cofactor.

Its subcellular location is the cytoplasm. It carries out the reaction Endonucleolytic cleavage to 5'-phosphomonoester.. In terms of biological role, endonuclease that specifically degrades the RNA of RNA-DNA hybrids. The polypeptide is Ribonuclease HII (Clostridium botulinum (strain Hall / ATCC 3502 / NCTC 13319 / Type A)).